The sequence spans 510 residues: Inner membrane protein YeeR (510 aa).

Met1 is a topological domain (cytoplasmic). The chain crosses the membrane as a helical span at residues 2 to 22; it reads LQIVGALILLIAGFAILRLLF. Topologically, residues 23-30 are periplasmic; sequence RALISTAS. A helical transmembrane segment spans residues 31-51; that stretch reads ALAGLILLCLFGPALLAGYIT. Over 52–61 the chain is Cytoplasmic; that stretch reads ERITRLFHIR. The helical transmembrane segment at 62–82 threads the bilayer; the sequence is WLAGVFLTIAGMIISFMWGLD. The Periplasmic portion of the chain corresponds to 83–94; sequence GKHIALEAHTFD. The helical transmembrane segment at 95–115 threads the bilayer; the sequence is SVKFILTTALAGGLLAVPLQI. Topologically, residues 116 to 136 are cytoplasmic; the sequence is KNIQQNGITPEDISKEINGYY. Residues 137–157 traverse the membrane as a helical segment; it reads CCFYTAFFLMACSACAPLIAL. Over 158-164 the chain is Periplasmic; the sequence is QYDISPS. A helical transmembrane segment spans residues 165–185; that stretch reads LMWWGGLLYWLAALVTLLWAA. At 186 to 510 the chain is on the cytoplasmic side; it reads SQIQALKKLT…KIREGKVEER (325 aa).

It is found in the cell inner membrane. The polypeptide is Inner membrane protein YeeR (yeeR) (Escherichia coli (strain K12)).